A 410-amino-acid chain; its full sequence is Alanine racemase (410 aa).

Positions 28–76 (VDFLHNVANKEEFAGNTSPRTAAYTLVREDASLGSTPKLPLGASYAKNL) constitute an RPE1 insert domain. Lysine 83 (proton acceptor; specific for D-alanine) is an active-site residue. The residue at position 83 (lysine 83) is an N6-(pyridoxal phosphate)lysine. Arginine 182 serves as a coordination point for substrate. Tyrosine 305 (proton acceptor; specific for L-alanine) is an active-site residue. Methionine 353 contacts substrate.

It belongs to the alanine racemase family. Pyridoxal 5'-phosphate is required as a cofactor.

It carries out the reaction L-alanine = D-alanine. The protein operates within amino-acid biosynthesis; D-alanine biosynthesis; D-alanine from L-alanine: step 1/1. Catalyzes the interconversion of L-alanine and D-alanine. May also act on other amino acids. The sequence is that of Alanine racemase (alr) from Rickettsia bellii (strain RML369-C).